Here is a 343-residue protein sequence, read N- to C-terminus: Palmitoyltransferase ZDHHC4 (343 aa).

Topologically, residues 1–2 are lumenal; it reads MD. A helical membrane pass occupies residues 3–23; the sequence is FLVLFLFYLAFLLICVVLICI. Residues 24 to 67 are Cytoplasmic-facing; that stretch reads FTKSQRLKAVVLGGAQVCSRVIPQCLQRAVQTLLHQLFHTRHPT. The helical transmembrane segment at 68-88 threads the bilayer; that stretch reads FIVLHLLLQGLVYAEYTCEVF. At 89-100 the chain is on the lumenal side; it reads GYCRELEFSLPY. Residues 101–121 form a helical membrane-spanning segment; it reads LLLPYVLLSVNLVFFTLTCAA. Residues 122-193 are Cytoplasmic-facing; sequence NPGTITKANE…NCIGAWNTRY (72 aa). Positions 149-199 constitute a DHHC domain; it reads SRCPTCDLRKPARSKHCRLCDRCVHRFDHHCVWVNNCIGAWNTRYFLIYLL. The active-site S-palmitoyl cysteine intermediate is the C179. The chain crosses the membrane as a helical span at residues 194–214; the sequence is FLIYLLTLTASAATIATVTAA. The Lumenal segment spans residues 215 to 255; it reads FLLRLVTVSDLYQETYLDDVGHFQAVDTVFLIQHLFLAFPR. A helical transmembrane segment spans residues 256-276; it reads IVFLLGFVIVLSMLLAGYLCF. Residues 277–343 lie on the Cytoplasmic side of the membrane; the sequence is ALYLAATNQT…ATPSYKKKEK (67 aa). Residues 340-343 carry the Di-lysine motif motif; the sequence is KKEK.

This sequence belongs to the DHHC palmitoyltransferase family. Interacts with CPT1A.

It localises to the endoplasmic reticulum membrane. Its subcellular location is the golgi apparatus membrane. The protein localises to the cell membrane. The enzyme catalyses L-cysteinyl-[protein] + hexadecanoyl-CoA = S-hexadecanoyl-L-cysteinyl-[protein] + CoA. Functionally, palmitoyltransferase that could catalyze the addition of palmitate onto protein substrates including the D(2) dopamine receptor DRD2, GSK3B or MAVS. Mediates GSK3B palmitoylation to prevent its AKT1-mediated phosphorylation leading to activation of the STAT3 signaling pathway. Also catalyzes MAVS palmitoylation which promotes its stabilization and activation by inhibiting 'Lys-48'- but facilitating 'Lys-63'-linked ubiquitination. The protein is Palmitoyltransferase ZDHHC4 of Mus musculus (Mouse).